We begin with the raw amino-acid sequence, 876 residues long: Alanine--tRNA ligase (876 aa).

Zn(2+) contacts are provided by His565, His569, Cys667, and His671.

Belongs to the class-II aminoacyl-tRNA synthetase family. Zn(2+) is required as a cofactor.

Its subcellular location is the cytoplasm. The enzyme catalyses tRNA(Ala) + L-alanine + ATP = L-alanyl-tRNA(Ala) + AMP + diphosphate. Functionally, catalyzes the attachment of alanine to tRNA(Ala) in a two-step reaction: alanine is first activated by ATP to form Ala-AMP and then transferred to the acceptor end of tRNA(Ala). Also edits incorrectly charged Ser-tRNA(Ala) and Gly-tRNA(Ala) via its editing domain. The polypeptide is Alanine--tRNA ligase (Desulfosudis oleivorans (strain DSM 6200 / JCM 39069 / Hxd3) (Desulfococcus oleovorans)).